A 124-amino-acid chain; its full sequence is BLOC-1-related complex subunit 8 (124 aa).

The segment at 102 to 124 (SSSQGRSAVINPNETPAHTSVTP) is disordered.

The protein belongs to the BORCS8 family.

It is found in the lysosome membrane. Its function is as follows. As part of a BORC-like complex, it may play a role in the movement and localization of lysosomes at the cell periphery. Associated with the cytosolic face of lysosomes, this complex may couple lysosomes to microtubule plus-end-directed kinesin motors, driving lysosome movement toward the cell periphery. The polypeptide is BLOC-1-related complex subunit 8 (Danio rerio (Zebrafish)).